We begin with the raw amino-acid sequence, 325 residues long: Bifunctional ligase/repressor BirA (325 aa).

The H-T-H motif DNA-binding region spans 23–42; that stretch reads GQKISDALGCSRTAVWKHIE. The 189-residue stretch at 74-262 folds into the BPL/LPL catalytic domain; that stretch reads RFGLKTEVMG…CFEKRYRDYM (189 aa). Residues glutamine 118, 122 to 124, and lysine 189 contribute to the biotin site; that span reads RGR.

The protein belongs to the biotin--protein ligase family.

The enzyme catalyses biotin + L-lysyl-[protein] + ATP = N(6)-biotinyl-L-lysyl-[protein] + AMP + diphosphate + H(+). Its function is as follows. Acts both as a biotin--[acetyl-CoA-carboxylase] ligase and a repressor. This is Bifunctional ligase/repressor BirA from Bacillus spizizenii (strain ATCC 23059 / NRRL B-14472 / W23) (Bacillus subtilis subsp. spizizenii).